The chain runs to 87 residues: MSKPESCDENACKPFACAIQDCLIENGYNESKCTKAIDNLYKCCKQFYEENGPDAASVCCPKFNLLQLKLKQRSLGKIDAELIQSRK.

Residues 9 to 51 (ENACKPFACAIQDCLIENGYNESKCTKAIDNLYKCCKQFYEEN) form the CHCH domain. 2 consecutive short sequence motifs (cx9C motif) follow at residues 12–22 (CKPFACAIQDC) and 33–43 (CTKAIDNLYKC). 2 disulfide bridges follow: cysteine 12–cysteine 43 and cysteine 22–cysteine 33.

This sequence belongs to the CMC4 family.

It localises to the mitochondrion intermembrane space. This chain is Cx9C motif-containing protein 4, mitochondrial (CMC4), found in Clavispora lusitaniae (strain ATCC 42720) (Yeast).